The following is a 275-amino-acid chain: uncharacterized protein (275 aa).

Positions alanine 75 to glycine 157 form a coiled coil.

This is an uncharacterized protein from Bacillus subtilis (strain 168).